We begin with the raw amino-acid sequence, 380 residues long: ATP phosphoribosyltransferase regulatory subunit (380 aa).

This sequence belongs to the class-II aminoacyl-tRNA synthetase family. HisZ subfamily. In terms of assembly, heteromultimer composed of HisG and HisZ subunits.

It localises to the cytoplasm. Its pathway is amino-acid biosynthesis; L-histidine biosynthesis; L-histidine from 5-phospho-alpha-D-ribose 1-diphosphate: step 1/9. Required for the first step of histidine biosynthesis. May allow the feedback regulation of ATP phosphoribosyltransferase activity by histidine. This is ATP phosphoribosyltransferase regulatory subunit from Thermoanaerobacter sp. (strain X514).